The primary structure comprises 417 residues: 1-deoxy-D-xylulose 5-phosphate reductoisomerase (417 aa).

Threonine 10, glycine 11, serine 12, isoleucine 13, glycine 36, arginine 37, asparagine 38, and asparagine 130 together coordinate NADPH. A 1-deoxy-D-xylulose 5-phosphate-binding site is contributed by lysine 131. NADPH is bound at residue glutamate 132. Residue aspartate 156 coordinates Mn(2+). Serine 157, glutamate 158, serine 194, and histidine 217 together coordinate 1-deoxy-D-xylulose 5-phosphate. Residue glutamate 158 participates in Mn(2+) binding. Glycine 223 contacts NADPH. Serine 230, asparagine 235, lysine 236, and glutamate 239 together coordinate 1-deoxy-D-xylulose 5-phosphate. Position 239 (glutamate 239) interacts with Mn(2+).

This sequence belongs to the DXR family. It depends on Mg(2+) as a cofactor. Mn(2+) is required as a cofactor.

The catalysed reaction is 2-C-methyl-D-erythritol 4-phosphate + NADP(+) = 1-deoxy-D-xylulose 5-phosphate + NADPH + H(+). It participates in isoprenoid biosynthesis; isopentenyl diphosphate biosynthesis via DXP pathway; isopentenyl diphosphate from 1-deoxy-D-xylulose 5-phosphate: step 1/6. In terms of biological role, catalyzes the NADPH-dependent rearrangement and reduction of 1-deoxy-D-xylulose-5-phosphate (DXP) to 2-C-methyl-D-erythritol 4-phosphate (MEP). This is 1-deoxy-D-xylulose 5-phosphate reductoisomerase from Synechococcus sp. (strain CC9902).